The chain runs to 579 residues: MIRTWIALVPNDHRARLIGFALLAFCSVVARAVGTVLLVPLMAALFGEAPQRAWLWLGWLSAATVAGWVLDAVTARIGIELGFAVLNHTQHDVADRLPVVRLDWFTAENTATARQAIAATGPELVGLVVNLVTPLTSAILLPAVIALALLPISWQLGVAALAGVPLLLGALWASAAFARRADTAADKANTALTERIIEFARTQQALRAARRVEPARSLVGNALASQHTATMRLLGMQIPGQLLFSIASQLALIVLAGTTAALTITGTLTVPEAIALIVVMVRYLEPFTAVSELAPALESTRATLGRIGSVLTAPVMVAGSGTWRDGAVVPRIEFDDVAFGYDGGSGPVLDGVSFCLQPGTTTAIVGPSGCGKSTILALIAGLHQPTRGRVLIDGTDVATLDARAQQAVCSVVFQHPYLFHGTIRDNVFAADPGASDDQFAQAVRLARVDELIARLPDGANTIVGEAGSALSGGERQRVSIARALLKAAPVLLVDEATSALDAENEAAVVDALAADPRSRTRVIVAHRLASIRHADRVLFVDDGRVVEDGSISELLTAGGRFSQFWRQQHEAAEWQILAE.

Over 1 to 16 (MIRTWIALVPNDHRAR) the chain is Cytoplasmic. A helical transmembrane segment spans residues 17–37 (LIGFALLAFCSVVARAVGTVL). Residues 17 to 299 (LIGFALLAFC…VSELAPALES (283 aa)) enclose the ABC transmembrane type-1 domain. Residues 38–52 (LVPLMAALFGEAPQR) lie on the Periplasmic side of the membrane. A helical transmembrane segment spans residues 53-73 (AWLWLGWLSAATVAGWVLDAV). Topologically, residues 74-123 (TARIGIELGFAVLNHTQHDVADRLPVVRLDWFTAENTATARQAIAATGPE) are cytoplasmic. A helical transmembrane segment spans residues 124–146 (LVGLVVNLVTPLTSAILLPAVIA). The Periplasmic segment spans residues 147-155 (LALLPISWQ). The helical transmembrane segment at 156–178 (LGVAALAGVPLLLGALWASAAFA) threads the bilayer. The Cytoplasmic segment spans residues 179 to 237 (RRADTAADKANTALTERIIEFARTQQALRAARRVEPARSLVGNALASQHTATMRLLGMQ). Residues 238 to 258 (IPGQLLFSIASQLALIVLAGT) traverse the membrane as a helical segment. Over 259 to 579 (TAALTITGTL…EAAEWQILAE (321 aa)) the chain is Periplasmic. In terms of domain architecture, ABC transporter spans 332 to 567 (IEFDDVAFGY…GGRFSQFWRQ (236 aa)). 366 to 373 (GPSGCGKS) provides a ligand contact to ATP.

Belongs to the ABC transporter superfamily. Siderophore-Fe(3+) uptake transporter (SIUT) (TC 3.A.1.21) family. In terms of assembly, forms a heterodimer with IrtA.

The protein resides in the cell inner membrane. Part of the ABC transporter complex IrtAB involved in the import of iron-bound mycobactin (Fe-MBT) and carboxymycobactin (Fe-cMBT). Transmembrane domains (TMD) form a pore in the membrane and the ATP-binding domain (NBD) is responsible for energy generation. In Mycobacterium bovis (strain ATCC BAA-935 / AF2122/97), this protein is Mycobactin import ATP-binding/permease protein IrtB (irtB).